Here is a 206-residue protein sequence, read N- to C-terminus: RILP-like protein 2 (206 aa).

The segment at 1–29 (MEEPPLREEEEEEEEDEAGPEGALGKSPL) is disordered. A compositionally biased stretch (acidic residues) spans 8–19 (EEEEEEEEDEAG). An RH1 domain is found at 19–108 (GPEGALGKSP…RREGSAAGPE (90 aa)). A coiled-coil region spans residues 67–159 (LEMLETLVNE…VQEELQCYKS (93 aa)). The region spanning 125-197 (RPRFTLQELR…KEEKTIIRKL (73 aa)) is the RH2 domain. Residues 161 to 189 (LIPPREGPGGRREKEALFPRGSNANSNKE) are disordered. A compositionally biased stretch (basic and acidic residues) spans 168–177 (PGGRREKEAL).

It belongs to the RILPL family. Homodimer. Interacts with RAC1. Interacts (via N-terminus) with MYO5A, the interaction is required for its role in dendrite formation. Interacts with RAB8A; interaction is dependent on the phosphorylation of RAB8A on 'Thr-72'. Interacts with RAB10 and RAB12; interaction is dependent on the phosphorylation of 'Thr-73' on RAB10 and 'Ser-105' on RAB12.

Its subcellular location is the cytoplasm. The protein resides in the cytosol. It is found in the cytoskeleton. The protein localises to the microtubule organizing center. It localises to the centrosome. Its subcellular location is the cell projection. The protein resides in the cilium. Functionally, involved in cell shape and neuronal morphogenesis, positively regulating the establishment and maintenance of dendritic spines. Plays a role in cellular protein transport, including protein transport away from primary cilia. May function via activation of RAC1 and PAK1. The sequence is that of RILP-like protein 2 (RILPL2) from Bos taurus (Bovine).